Consider the following 428-residue polypeptide: MNYLFKNGRYMNEEGKIVATDLLVQDGKIAKVAENITADNAEVIDVNGKLIAPGLVDVHVHLREPGGEHKETIETGTLAAAKGGFTTICAMPNTRPVPDCREHMEDLQNRIKEKAHVNVLPYGAITVRQAGSEMTDFETLKELGAFAFTDDGVGVQDASMMLAAMKRAAKLNMAVVAHCEENTLINKGCVHEGKFSEKHGLNGIPSVCESVHIARDILLAEAADCHYHVCHVSTKGSVRVIRDAKRAGIKVTAEVTPHHLVLCEDDIPSADPNFKMNPPLRGKEDHAALIEGLLDGTIDMIATDHAPHTAEEKAQGIERAPFGITGFETAFPLLYTNLVKKGIITLEQLIQFLTEKPADTFGLEAGRLKEGRTADITIIDLEQEEEIDPTTFLSKGKNTPFAGWKCQGWPVMTIVGGKIAWQKESALV.

Zn(2+) is bound by residues H59 and H61. Substrate is bound by residues 61–63 (HLR) and N93. Residues D151, H178, and H231 each coordinate Zn(2+). N277 contributes to the substrate binding site. D304 contributes to the Zn(2+) binding site. The active site involves D304. Substrate-binding positions include H308 and 322 to 323 (FG).

This sequence belongs to the metallo-dependent hydrolases superfamily. DHOase family. Class I DHOase subfamily. Zn(2+) serves as cofactor.

The catalysed reaction is (S)-dihydroorotate + H2O = N-carbamoyl-L-aspartate + H(+). It participates in pyrimidine metabolism; UMP biosynthesis via de novo pathway; (S)-dihydroorotate from bicarbonate: step 3/3. Functionally, catalyzes the reversible cyclization of carbamoyl aspartate to dihydroorotate. The chain is Dihydroorotase from Bacillus cereus (strain ZK / E33L).